A 607-amino-acid chain; its full sequence is Elongation factor 4 (607 aa).

The tr-type G domain occupies 11–193; that stretch reads ENIRNFSIIA…KIVEVVPAPD (183 aa). Residues 23 to 28 and 140 to 143 each bind GTP; these read DHGKST and NKID.

It belongs to the TRAFAC class translation factor GTPase superfamily. Classic translation factor GTPase family. LepA subfamily.

The protein localises to the cell membrane. It carries out the reaction GTP + H2O = GDP + phosphate + H(+). Functionally, required for accurate and efficient protein synthesis under certain stress conditions. May act as a fidelity factor of the translation reaction, by catalyzing a one-codon backward translocation of tRNAs on improperly translocated ribosomes. Back-translocation proceeds from a post-translocation (POST) complex to a pre-translocation (PRE) complex, thus giving elongation factor G a second chance to translocate the tRNAs correctly. Binds to ribosomes in a GTP-dependent manner. The sequence is that of Elongation factor 4 from Staphylococcus aureus (strain MW2).